The chain runs to 349 residues: 4-hydroxythreonine-4-phosphate dehydrogenase (349 aa).

Substrate-binding residues include His141 and Thr142. Residues His176, His221, and His276 each coordinate a divalent metal cation. Residues Lys284, Asn293, and Arg302 each coordinate substrate.

The protein belongs to the PdxA family. Homodimer. Zn(2+) serves as cofactor. Mg(2+) is required as a cofactor. It depends on Co(2+) as a cofactor.

It localises to the cytoplasm. It catalyses the reaction 4-(phosphooxy)-L-threonine + NAD(+) = 3-amino-2-oxopropyl phosphate + CO2 + NADH. It participates in cofactor biosynthesis; pyridoxine 5'-phosphate biosynthesis; pyridoxine 5'-phosphate from D-erythrose 4-phosphate: step 4/5. Functionally, catalyzes the NAD(P)-dependent oxidation of 4-(phosphooxy)-L-threonine (HTP) into 2-amino-3-oxo-4-(phosphooxy)butyric acid which spontaneously decarboxylates to form 3-amino-2-oxopropyl phosphate (AHAP). The polypeptide is 4-hydroxythreonine-4-phosphate dehydrogenase (Methylorubrum extorquens (strain CM4 / NCIMB 13688) (Methylobacterium extorquens)).